A 164-amino-acid chain; its full sequence is uncharacterized protein (164 aa).

2 CBS domains span residues 9 to 66 and 72 to 128; these read ATTK…DIDS and MTKD…VHTM.

This is an uncharacterized protein from Acidianus ambivalens (Desulfurolobus ambivalens).